A 407-amino-acid chain; its full sequence is Wilms tumor protein homolog B (407 aa).

Glycyl lysine isopeptide (Lys-Gly) (interchain with G-Cter in SUMO) cross-links involve residues lysine 55 and lysine 158. The 9aaTAD motif lies at 213 to 221 (MTWNQMNLG). 4 consecutive C2H2-type zinc fingers follow at residues 284–308 (FMCA…SRKH), 314–338 (YQCD…QRRH), 344–366 (FQCK…TRTH), and 372–396 (FSCR…HNMH). 2 important for interaction with target DNA regions span residues 328-342 (SDQL…TGVK) and 354-362 (SRSDHLKTH).

It belongs to the EGR C2H2-type zinc-finger protein family. Expressed in the pronephric anlage from stage 23 to 30. Also expressed in the adult kidney (mesonephros) and in testis.

The protein resides in the nucleus. It localises to the cytoplasm. It is found in the nucleus speckle. Its function is as follows. Transcription factor required for development of the vascular component of the pronephric kidney, the glomus; may repress tubule-specific gene expression in the portion of the pronephros fated to form the glomus. Recognizes and binds to the DNA sequence 5'-GCG(T/G)GGGCG-3'. Inhibits Wnt-signaling during embryonic development. The protein is Wilms tumor protein homolog B (wt1-b) of Xenopus laevis (African clawed frog).